The sequence spans 239 residues: Glutathione S-transferase verG (239 aa).

The 84-residue stretch at 18 to 101 (KPLIFVMEGR…YLSNKYDAKR (84 aa)) folds into the GST N-terminal domain. The 131-residue stretch at 107 to 237 (NAAENLEICN…ELDSRKEIAI (131 aa)) folds into the GST C-terminal domain.

The protein belongs to the GST superfamily.

It carries out the reaction RX + glutathione = an S-substituted glutathione + a halide anion + H(+). It functions in the pathway mycotoxin biosynthesis. Glutathione S-transferase; part of the gene cluster that mediates the biosynthesis of 11'-deoxyverticillin A, one of the dimeric epipolythiodioxopiperazines (ETPs) from the verticillin family that act as mycotoxins. 11'-deoxyverticillin A is required for normal conidiation. The nonribosomal peptide synthetase verP is speculated to be responsible for condensation of amino acids to form the carbon skeleton of verticillin, whereas the cluster-specific tailoring enzymes are involved in further modifications leading to the production of 11'-deoxyverticillin A. The polypeptide is Glutathione S-transferase verG (Clonostachys rogersoniana).